We begin with the raw amino-acid sequence, 545 residues long: Chaperonin GroEL (545 aa).

ATP-binding positions include 29–32, Lys-50, 86–90, Gly-415, and Asp-495; these read TLGP and DGTTT.

It belongs to the chaperonin (HSP60) family. As to quaternary structure, forms a cylinder of 14 subunits composed of two heptameric rings stacked back-to-back. Interacts with the co-chaperonin GroES.

The protein resides in the cytoplasm. It carries out the reaction ATP + H2O + a folded polypeptide = ADP + phosphate + an unfolded polypeptide.. Together with its co-chaperonin GroES, plays an essential role in assisting protein folding. The GroEL-GroES system forms a nano-cage that allows encapsulation of the non-native substrate proteins and provides a physical environment optimized to promote and accelerate protein folding. This is Chaperonin GroEL from Phocaeicola vulgatus (strain ATCC 8482 / DSM 1447 / JCM 5826 / CCUG 4940 / NBRC 14291 / NCTC 11154) (Bacteroides vulgatus).